The primary structure comprises 420 residues: Glutamate-1-semialdehyde 2,1-aminomutase (420 aa).

Lys-259 bears the N6-(pyridoxal phosphate)lysine mark.

The protein belongs to the class-III pyridoxal-phosphate-dependent aminotransferase family. HemL subfamily. In terms of assembly, homodimer. It depends on pyridoxal 5'-phosphate as a cofactor.

Its subcellular location is the cytoplasm. The enzyme catalyses (S)-4-amino-5-oxopentanoate = 5-aminolevulinate. It functions in the pathway porphyrin-containing compound metabolism; protoporphyrin-IX biosynthesis; 5-aminolevulinate from L-glutamyl-tRNA(Glu): step 2/2. In Nautilia profundicola (strain ATCC BAA-1463 / DSM 18972 / AmH), this protein is Glutamate-1-semialdehyde 2,1-aminomutase.